The primary structure comprises 393 residues: 1-deoxy-D-xylulose 5-phosphate reductoisomerase (393 aa).

Residues threonine 10, glycine 11, serine 12, isoleucine 13, arginine 37, glutamine 38, and asparagine 124 each contribute to the NADPH site. Residue lysine 125 participates in 1-deoxy-D-xylulose 5-phosphate binding. Glutamate 126 is a binding site for NADPH. Aspartate 150 serves as a coordination point for Mn(2+). The 1-deoxy-D-xylulose 5-phosphate site is built by serine 151, glutamate 152, serine 179, and histidine 202. Glutamate 152 lines the Mn(2+) pocket. NADPH is bound at residue glycine 208. Serine 215, asparagine 220, lysine 221, and glutamate 224 together coordinate 1-deoxy-D-xylulose 5-phosphate. Glutamate 224 serves as a coordination point for Mn(2+).

It belongs to the DXR family. Mg(2+) is required as a cofactor. It depends on Mn(2+) as a cofactor.

It catalyses the reaction 2-C-methyl-D-erythritol 4-phosphate + NADP(+) = 1-deoxy-D-xylulose 5-phosphate + NADPH + H(+). The protein operates within isoprenoid biosynthesis; isopentenyl diphosphate biosynthesis via DXP pathway; isopentenyl diphosphate from 1-deoxy-D-xylulose 5-phosphate: step 1/6. Catalyzes the NADPH-dependent rearrangement and reduction of 1-deoxy-D-xylulose-5-phosphate (DXP) to 2-C-methyl-D-erythritol 4-phosphate (MEP). In Cupriavidus taiwanensis (strain DSM 17343 / BCRC 17206 / CCUG 44338 / CIP 107171 / LMG 19424 / R1) (Ralstonia taiwanensis (strain LMG 19424)), this protein is 1-deoxy-D-xylulose 5-phosphate reductoisomerase.